Here is a 1161-residue protein sequence, read N- to C-terminus: Auxin response factor 19 (1161 aa).

The interval 1–20 is disordered; it reads MMKQAQQQPPPPPASSAATT. The TF-B3 DNA-binding region spans 154-256; the sequence is FCKTLTASDT…QLLLGIRRAN (103 aa). Residues 573–598 are disordered; it reads NQMQQQHASSTQGQQPATSQPLLLPQ. In terms of domain architecture, PB1 spans 1027–1111; it reads RTFTKVYKRG…KCIRILSPQE (85 aa).

It belongs to the ARF family. As to quaternary structure, homodimers and heterodimers. As to expression, expressed in roots, culms, leaves and young panicles.

Its subcellular location is the nucleus. Auxin response factors (ARFs) are transcriptional factors that bind specifically to the DNA sequence 5'-TGTCTC-3' found in the auxin-responsive promoter elements (AuxREs). The sequence is that of Auxin response factor 19 (ARF19) from Oryza sativa subsp. japonica (Rice).